We begin with the raw amino-acid sequence, 496 residues long: Probable cytosol aminopeptidase (496 aa).

Lys-266 and Asp-271 together coordinate Mn(2+). Residue Lys-278 is part of the active site. 3 residues coordinate Mn(2+): Asp-289, Asp-348, and Glu-350. Arg-352 is an active-site residue.

The protein belongs to the peptidase M17 family. Mn(2+) is required as a cofactor.

Its subcellular location is the cytoplasm. It catalyses the reaction Release of an N-terminal amino acid, Xaa-|-Yaa-, in which Xaa is preferably Leu, but may be other amino acids including Pro although not Arg or Lys, and Yaa may be Pro. Amino acid amides and methyl esters are also readily hydrolyzed, but rates on arylamides are exceedingly low.. The enzyme catalyses Release of an N-terminal amino acid, preferentially leucine, but not glutamic or aspartic acids.. Presumably involved in the processing and regular turnover of intracellular proteins. Catalyzes the removal of unsubstituted N-terminal amino acids from various peptides. In Pseudomonas fluorescens (strain Pf0-1), this protein is Probable cytosol aminopeptidase.